Here is a 156-residue protein sequence, read N- to C-terminus: 6,7-dimethyl-8-ribityllumazine synthase (156 aa).

5-amino-6-(D-ribitylamino)uracil contacts are provided by residues Phe22, 56-58 (ALE), and 80-82 (AVI). Residue 85-86 (DT) coordinates (2S)-2-hydroxy-3-oxobutyl phosphate. His88 functions as the Proton donor in the catalytic mechanism. Phe113 is a binding site for 5-amino-6-(D-ribitylamino)uracil. Arg127 is a (2S)-2-hydroxy-3-oxobutyl phosphate binding site.

The protein belongs to the DMRL synthase family.

The catalysed reaction is (2S)-2-hydroxy-3-oxobutyl phosphate + 5-amino-6-(D-ribitylamino)uracil = 6,7-dimethyl-8-(1-D-ribityl)lumazine + phosphate + 2 H2O + H(+). Its pathway is cofactor biosynthesis; riboflavin biosynthesis; riboflavin from 2-hydroxy-3-oxobutyl phosphate and 5-amino-6-(D-ribitylamino)uracil: step 1/2. Its function is as follows. Catalyzes the formation of 6,7-dimethyl-8-ribityllumazine by condensation of 5-amino-6-(D-ribitylamino)uracil with 3,4-dihydroxy-2-butanone 4-phosphate. This is the penultimate step in the biosynthesis of riboflavin. This Leuconostoc mesenteroides subsp. mesenteroides (strain ATCC 8293 / DSM 20343 / BCRC 11652 / CCM 1803 / JCM 6124 / NCDO 523 / NBRC 100496 / NCIMB 8023 / NCTC 12954 / NRRL B-1118 / 37Y) protein is 6,7-dimethyl-8-ribityllumazine synthase.